The primary structure comprises 252 residues: Bridging integrator 3 homolog (252 aa).

One can recognise a BAR domain in the interval 8–231 (GGPKKQIVPK…VDEVQLSDAE (224 aa)). 3 coiled-coil regions span residues 17–57 (KTVE…MSKS), 119–150 (SLNMAVKRREQALQDYKRLQTKVEKYEEKDKT), and 224–244 (EVQLSDAEREQENEARLAELR).

It is found in the cytoplasm. It localises to the cytoskeleton. In terms of biological role, involved in cytokinesis and septation where it has a role in the localization of F-actin. The sequence is that of Bridging integrator 3 homolog (bin3) from Xenopus laevis (African clawed frog).